Here is a 272-residue protein sequence, read N- to C-terminus: Bis(5'-nucleosyl)-tetraphosphatase, symmetrical (272 aa).

It belongs to the Ap4A hydrolase family.

The enzyme catalyses P(1),P(4)-bis(5'-adenosyl) tetraphosphate + H2O = 2 ADP + 2 H(+). Its function is as follows. Hydrolyzes diadenosine 5',5'''-P1,P4-tetraphosphate to yield ADP. The polypeptide is Bis(5'-nucleosyl)-tetraphosphatase, symmetrical (Chromohalobacter salexigens (strain ATCC BAA-138 / DSM 3043 / CIP 106854 / NCIMB 13768 / 1H11)).